Consider the following 327-residue polypeptide: Cobalamin biosynthesis protein CobD (327 aa).

4 consecutive transmembrane segments (helical) span residues 61 to 78 (MWLT…GLVI), 80 to 102 (SILP…ILLA), 160 to 182 (GIVA…YKLI), and 300 to 322 (AALV…ASLV).

The protein belongs to the CobD/CbiB family.

It is found in the cell membrane. It functions in the pathway cofactor biosynthesis; adenosylcobalamin biosynthesis. Functionally, converts cobyric acid to cobinamide by the addition of aminopropanol on the F carboxylic group. The sequence is that of Cobalamin biosynthesis protein CobD from Brucella suis biovar 1 (strain 1330).